The following is a 243-amino-acid chain: Small ribosomal subunit protein uS2c (243 aa).

The segment at 224 to 243 (GNNGKVSSDQEDTQELQTVQ) is disordered.

This sequence belongs to the universal ribosomal protein uS2 family.

The protein resides in the plastid. The protein localises to the chloroplast. In Rhodomonas salina (Cryptomonas salina), this protein is Small ribosomal subunit protein uS2c (rps2).